The following is a 526-amino-acid chain: Bifunctional purine biosynthesis protein PurH (526 aa).

Residues 1-147 (MTKIERALIS…KNWAHVAIVT (147 aa)) form the MGS-like domain.

It belongs to the PurH family.

The enzyme catalyses (6R)-10-formyltetrahydrofolate + 5-amino-1-(5-phospho-beta-D-ribosyl)imidazole-4-carboxamide = 5-formamido-1-(5-phospho-D-ribosyl)imidazole-4-carboxamide + (6S)-5,6,7,8-tetrahydrofolate. It carries out the reaction IMP + H2O = 5-formamido-1-(5-phospho-D-ribosyl)imidazole-4-carboxamide. It participates in purine metabolism; IMP biosynthesis via de novo pathway; 5-formamido-1-(5-phospho-D-ribosyl)imidazole-4-carboxamide from 5-amino-1-(5-phospho-D-ribosyl)imidazole-4-carboxamide (10-formyl THF route): step 1/1. The protein operates within purine metabolism; IMP biosynthesis via de novo pathway; IMP from 5-formamido-1-(5-phospho-D-ribosyl)imidazole-4-carboxamide: step 1/1. This is Bifunctional purine biosynthesis protein PurH from Laribacter hongkongensis (strain HLHK9).